The primary structure comprises 623 residues: DNA polymerase alpha subunit B (623 aa).

Residues 113 to 151 (IPKIKDEPSSSVDVSTARNKNNHNNNNNNNPSLPNKSMF) are disordered. The segment covering 121-130 (SSSVDVSTAR) has biased composition (polar residues).

The protein belongs to the DNA polymerase alpha subunit B family. DNA polymerase alpha:primase is a four subunit enzyme complex, which is assembled throughout the cell cycle, and consists of the two DNA polymerase subunits A and B, and the DNA primase large and small subunits. Subunit B binds to subunit A.

The protein resides in the nucleus. Functionally, may play an essential role at the early stage of chromosomal DNA replication by coupling the polymerase alpha/primase complex to the cellular replication machinery. This is DNA polymerase alpha subunit B (polA2) from Dictyostelium discoideum (Social amoeba).